The chain runs to 35 residues: uncharacterized protein (35 aa).

The span at 1-27 (MDQNEANIYNENNENNENNENENCQNE) shows a compositional bias: low complexity. The segment at 1–35 (MDQNEANIYNENNENNENNENENCQNEPIRIKIII) is disordered.

This is an uncharacterized protein from Dictyostelium discoideum (Social amoeba).